The sequence spans 777 residues: Ribosome-releasing factor 2, mitochondrial (777 aa).

In terms of domain architecture, tr-type G spans 68–353 (AKIRNIGIMA…AVTMYLPSPE (286 aa)). GTP contacts are provided by residues 77-84 (AHIDAGKT), 141-145 (DTPGH), and 195-198 (NKMD).

The protein belongs to the TRAFAC class translation factor GTPase superfamily. Classic translation factor GTPase family. EF-G/EF-2 subfamily.

It localises to the mitochondrion. The enzyme catalyses GTP + H2O = GDP + phosphate + H(+). In terms of biological role, mitochondrial GTPase that mediates the disassembly of ribosomes from messenger RNA at the termination of mitochondrial protein biosynthesis. Acts in collaboration with MRRF. GTP hydrolysis follows the ribosome disassembly and probably occurs on the ribosome large subunit. Not involved in the GTP-dependent ribosomal translocation step during translation elongation. The polypeptide is Ribosome-releasing factor 2, mitochondrial (Pongo abelii (Sumatran orangutan)).